The sequence spans 467 residues: MDTNGIKLTPKDIVSKLNEYIVGQNDAKRKVAIALRNRYRRSLLKEEEKQEIAPKNILMIGPTGVGKTEIARRMAKIVGAPFIKVEATKFTEVGYVGRDVESMVRDLVDVAVRLVKDEKKSLVKDEATKKANDKLVKLLVPSLKKKAAQGNNPLENLFGGAIPNFGQNQDEEEEPPTEEIKTKRSEIKKQLEQGKLENEKVRIKVEQDPASMGMLGTNQNQQIQDMMNQLMPKKKVEREVSVETARKILADDFADELIDQETANQQALELAEQMGIIFIDEIDKVATNNQNSGQDVSRQGVQRDILPILEGSMIQTKYGTVNTEHMLFIGAGAFHVSKPSDLIPELQGRFPIRVELESLSVEDFVRILTEPKLSLVKQYEALLQTEEVTVNFSEDAIQRLAEIAYQVNQDTDNIGARRLHTILEKMLEDLSFEAPSMPNAVVDITPQYVDDKLKSISTNKDLSAFIL.

ATP is bound by residues valine 22 and 64-69; that span reads GVGKTE. The segment at 166–185 is disordered; sequence GQNQDEEEEPPTEEIKTKRS. Residues aspartate 280, glutamate 345, and arginine 417 each coordinate ATP.

This sequence belongs to the ClpX chaperone family. HslU subfamily. A double ring-shaped homohexamer of HslV is capped on each side by a ring-shaped HslU homohexamer. The assembly of the HslU/HslV complex is dependent on binding of ATP.

It localises to the cytoplasm. Functionally, ATPase subunit of a proteasome-like degradation complex; this subunit has chaperone activity. The binding of ATP and its subsequent hydrolysis by HslU are essential for unfolding of protein substrates subsequently hydrolyzed by HslV. HslU recognizes the N-terminal part of its protein substrates and unfolds these before they are guided to HslV for hydrolysis. This chain is ATP-dependent protease ATPase subunit HslU, found in Staphylococcus epidermidis (strain ATCC 35984 / DSM 28319 / BCRC 17069 / CCUG 31568 / BM 3577 / RP62A).